Consider the following 219-residue polypeptide: Probable nicotinate-nucleotide adenylyltransferase (219 aa).

It belongs to the NadD family.

The enzyme catalyses nicotinate beta-D-ribonucleotide + ATP + H(+) = deamido-NAD(+) + diphosphate. It functions in the pathway cofactor biosynthesis; NAD(+) biosynthesis; deamido-NAD(+) from nicotinate D-ribonucleotide: step 1/1. In terms of biological role, catalyzes the reversible adenylation of nicotinate mononucleotide (NaMN) to nicotinic acid adenine dinucleotide (NaAD). This is Probable nicotinate-nucleotide adenylyltransferase from Pseudomonas putida (strain GB-1).